A 166-amino-acid chain; its full sequence is Phosphopantetheine adenylyltransferase (166 aa).

Substrate is bound at residue threonine 14. ATP-binding positions include 14–15 and histidine 22; that span reads TF. Substrate-binding residues include lysine 46, leucine 78, and arginine 92. ATP is bound by residues 93 to 95, glutamate 103, and 128 to 134; these read GLR and WMYLSSS.

Belongs to the bacterial CoaD family. Homohexamer. The cofactor is Mg(2+).

It localises to the cytoplasm. It catalyses the reaction (R)-4'-phosphopantetheine + ATP + H(+) = 3'-dephospho-CoA + diphosphate. It functions in the pathway cofactor biosynthesis; coenzyme A biosynthesis; CoA from (R)-pantothenate: step 4/5. Functionally, reversibly transfers an adenylyl group from ATP to 4'-phosphopantetheine, yielding dephospho-CoA (dPCoA) and pyrophosphate. This chain is Phosphopantetheine adenylyltransferase, found in Maridesulfovibrio salexigens (strain ATCC 14822 / DSM 2638 / NCIMB 8403 / VKM B-1763) (Desulfovibrio salexigens).